The sequence spans 414 residues: 3-oxoacyl-[acyl-carrier-protein] synthase 2 (414 aa).

The region spanning 3–411 is the Ketosynthase family 3 (KS3) domain; that stretch reads KRRVVITGLG…GTNGTLVLSR (409 aa). Residues cysteine 164, histidine 304, and histidine 341 each act as for beta-ketoacyl synthase activity in the active site.

Belongs to the thiolase-like superfamily. Beta-ketoacyl-ACP synthases family. As to quaternary structure, homodimer.

It catalyses the reaction a fatty acyl-[ACP] + malonyl-[ACP] + H(+) = a 3-oxoacyl-[ACP] + holo-[ACP] + CO2. The enzyme catalyses (9Z)-hexadecenoyl-[ACP] + malonyl-[ACP] + H(+) = 3-oxo-(11Z)-octadecenoyl-[ACP] + holo-[ACP] + CO2. It functions in the pathway lipid metabolism; fatty acid biosynthesis. Its function is as follows. Involved in the type II fatty acid elongation cycle. Catalyzes the elongation of a wide range of acyl-ACP by the addition of two carbons from malonyl-ACP to an acyl acceptor. Can efficiently catalyze the conversion of palmitoleoyl-ACP (cis-hexadec-9-enoyl-ACP) to cis-vaccenoyl-ACP (cis-octadec-11-enoyl-ACP), an essential step in the thermal regulation of fatty acid composition. This is 3-oxoacyl-[acyl-carrier-protein] synthase 2 (fabF) from Coxiella burnetii (strain RSA 493 / Nine Mile phase I).